The sequence spans 282 residues: Predicted GPI-anchored protein 23 (282 aa).

An N-terminal signal peptide occupies residues Met1–Ala18. The disordered stretch occupies residues Gly163–Met264. N-linked (GlcNAc...) asparagine glycosylation is found at Asn180, Asn192, and Asn257. Gly residues predominate over residues Gly186–Ser216. Positions Leu236–Met264 are enriched in low complexity. Ser259 is lipidated: GPI-anchor amidated serine. A propeptide spans Ser260–Ile282 (removed in mature form).

It is found in the cell membrane. Functionally, probable cell surface protein involved in the process of adhesion and early events of invasion. This chain is Predicted GPI-anchored protein 23 (PGA23), found in Candida albicans (strain SC5314 / ATCC MYA-2876) (Yeast).